A 66-amino-acid chain; its full sequence is Large ribosomal subunit protein uL29 (66 aa).

This sequence belongs to the universal ribosomal protein uL29 family.

The protein is Large ribosomal subunit protein uL29 of Sinorhizobium fredii (strain NBRC 101917 / NGR234).